Reading from the N-terminus, the 393-residue chain is MKHKVSKRVISLKWVPFLCISFFALGAIFTSRSWEPSSDSGSQLISQHHRDHELQIVSDDCAHNKKATQEKDVTGEVLRTHEAIQDDRSLDKSVSTLSSTRSSQEMVDGSETNPRKKVFMVMGINTAFSSRKRRDSVRETWMPQGEKLERLEQEKGIVIKFMIGHSATSNSILDRAIDSEDAQHKDFLRLEHVEGYHELSAKTKIFFSTAVAKWDAEFYIKVDDDVHVNLGMLASTLARHRSKPRVYIGCMKSGPVLAQNLLNCFRTVKYHEPEYWKFGEDGNKYFRHATGQIYAISKDLANYISINQPILHKYANEDVSLGSWFIGLEVEHIDDRNFCCGTPPDCRWKAEAGDVCVASFEWSCSGICKSVERMKIVHEVCSEGEGAVWNTLL.

Residues 9–29 traverse the membrane as a helical; Signal-anchor for type II membrane protein segment; the sequence is VISLKWVPFLCISFFALGAIF. Residues 89 to 112 form a disordered region; it reads SLDKSVSTLSSTRSSQEMVDGSET. Over residues 93-103 the composition is skewed to low complexity; that stretch reads SVSTLSSTRSS.

Belongs to the glycosyltransferase 31 family. Requires Mn(2+) as cofactor. Expressed in leaves, stems, flowers and siliques.

It is found in the golgi apparatus membrane. It participates in protein modification; protein glycosylation. Its function is as follows. Beta-1,3-galactosyltransferase that transfers galactose from UDP-galactose to substrates with a terminal glycosyl residue. The protein is Beta-1,3-galactosyltransferase 7 (B3GALT7) of Arabidopsis thaliana (Mouse-ear cress).